A 432-amino-acid polypeptide reads, in one-letter code: Glutamyl-tRNA reductase (432 aa).

Substrate contacts are provided by residues 55-58 (TCNR), S114, 119-121 (ETQ), and Q125. C56 functions as the Nucleophile in the catalytic mechanism. An NADP(+)-binding site is contributed by 194 to 199 (GAGEMI).

The protein belongs to the glutamyl-tRNA reductase family. As to quaternary structure, homodimer.

It catalyses the reaction (S)-4-amino-5-oxopentanoate + tRNA(Glu) + NADP(+) = L-glutamyl-tRNA(Glu) + NADPH + H(+). The protein operates within porphyrin-containing compound metabolism; protoporphyrin-IX biosynthesis; 5-aminolevulinate from L-glutamyl-tRNA(Glu): step 1/2. Functionally, catalyzes the NADPH-dependent reduction of glutamyl-tRNA(Glu) to glutamate 1-semialdehyde (GSA). This chain is Glutamyl-tRNA reductase, found in Burkholderia orbicola (strain AU 1054).